We begin with the raw amino-acid sequence, 475 residues long: Sulfate adenylyltransferase subunit 1 (475 aa).

In terms of domain architecture, tr-type G spans 25–239 (KSLLRFLTCG…EVLETVEIQR (215 aa)). A G1 region spans residues 34–41 (GSVDDGKS). GTP is bound at residue 34 to 41 (GSVDDGKS). Residues 92-96 (GITID) form a G2 region. A G3 region spans residues 113–116 (DTPG). GTP is bound by residues 113–117 (DTPGH) and 168–171 (NKMD). The interval 168–171 (NKMD) is G4. The G5 stretch occupies residues 206–208 (SAL).

It belongs to the TRAFAC class translation factor GTPase superfamily. Classic translation factor GTPase family. CysN/NodQ subfamily. Heterodimer composed of CysD, the smaller subunit, and CysN.

It catalyses the reaction sulfate + ATP + H(+) = adenosine 5'-phosphosulfate + diphosphate. It participates in sulfur metabolism; hydrogen sulfide biosynthesis; sulfite from sulfate: step 1/3. In terms of biological role, with CysD forms the ATP sulfurylase (ATPS) that catalyzes the adenylation of sulfate producing adenosine 5'-phosphosulfate (APS) and diphosphate, the first enzymatic step in sulfur assimilation pathway. APS synthesis involves the formation of a high-energy phosphoric-sulfuric acid anhydride bond driven by GTP hydrolysis by CysN coupled to ATP hydrolysis by CysD. The chain is Sulfate adenylyltransferase subunit 1 from Escherichia fergusonii (strain ATCC 35469 / DSM 13698 / CCUG 18766 / IAM 14443 / JCM 21226 / LMG 7866 / NBRC 102419 / NCTC 12128 / CDC 0568-73).